The sequence spans 134 residues: Small ribosomal subunit protein uS8c (134 aa).

It belongs to the universal ribosomal protein uS8 family. As to quaternary structure, part of the 30S ribosomal subunit.

It localises to the plastid. The protein localises to the chloroplast. One of the primary rRNA binding proteins, it binds directly to 16S rRNA central domain where it helps coordinate assembly of the platform of the 30S subunit. This chain is Small ribosomal subunit protein uS8c (rps8), found in Daucus carota (Wild carrot).